Consider the following 2370-residue polypeptide: Genome polyprotein (2370 aa).

Gly112 is lipidated: N-myristoyl glycine; by host. 2 disordered regions span residues 140 to 173 (VGDM…GNVV) and 704 to 736 (GADG…FDYP). Residues 154 to 171 (GSNKGGSSTSPKSTSNGN) show a composition bias toward low complexity. The span at 713-725 (APTSDLSDGNPTT) shows a compositional bias: polar residues. The 165-residue stretch at 1358–1522 (YSTALSAISL…AAFSAAAALK (165 aa)) folds into the SF3 helicase domain. ATP is bound at residue 1384-1391 (GPPGTGKS). The N-myristoyl glycine; by host moiety is linked to residue Gly1597. Residues 1646 to 1666 (IFAASSFLSLIAATLTIVRCL) form a helical membrane-spanning segment. A disordered region spans residues 1674–1696 (GAYSGTPVPKPRKKDLPKQPVYS). An O-(5'-phospho-RNA)-tyrosine modification is found at Tyr1676. Positions 1697 to 1886 (GPVRRQGFDP…FSARLTPERV (190 aa)) constitute a Peptidase C3 domain. Active-site for protease 3C activity residues include His1745, Glu1776, and Cys1849. Over residues 2007–2016 (SPGYPWTTQG) the composition is skewed to polar residues. The segment at 2007–2026 (SPGYPWTTQGRSRRSLFDED) is disordered. A RdRp catalytic domain is found at 2122–2239 (SNVWSIDYSC…GSNQDFHPRE (118 aa)). Active-site for RdRp activity residues include Asp2128 and Asp2225.

As to quaternary structure, interacts with capsid protein VP1. Interacts with capsid protein VP3. Interacts with capsid protein VP0. Interacts with capsid protein VP3. In terms of assembly, interacts with capsid protein VP0. Interacts with capsid protein VP1. As to quaternary structure, homodimer. Interacts with protein 2B. Interacts with protein 2C. Homodimer. Interacts with host ABCD3. Interacts with protein 2A. Interacts with host ACBD3. In terms of assembly, homodimer. Interacts with host ABCD3. Interacts with protein 2A. Interacts with protein 3A. Interacts with protein 3C. Interacts with host ACBD3. As to quaternary structure, homodimer. Interacts with host ABCD3 (via GOLD domain) and PI4KB; these interactions allow the formation of a viral protein/ACBD3/PI4KB complex in order to synthesize PI4P at the viral RNA replication sites. Interacts with protein 2C. Interacts with protein 3C. Protein 3C: Interacts with protein 2A. Protein 3C: Interacts with protein 2C. Specific enzymatic cleavages by the viral protease in vivo yield a variety of precursors and mature proteins. The leader protein-VP0 junction is cleaved by 3C proteinase. The VP1/2A junction is cleaved by the protein 3CD in association with protein 2A. In terms of processing, uridylylated by the polymerase and is covalently linked to the 5'-end of genomic RNA. This uridylylated form acts as a nucleotide-peptide primer for the polymerase.

The protein localises to the virion. It is found in the host cytoplasm. The protein resides in the host cytoplasmic vesicle membrane. Its subcellular location is the host Golgi apparatus membrane. It carries out the reaction RNA(n) + a ribonucleoside 5'-triphosphate = RNA(n+1) + diphosphate. It catalyses the reaction Selective cleavage of Gln-|-Gly bond in the poliovirus polyprotein. In other picornavirus reactions Glu may be substituted for Gln, and Ser or Thr for Gly.. The catalysed reaction is ATP + H2O = ADP + phosphate + H(+). Its function is as follows. Required for viral RNA replication and viral RNA encapsidation. Does not have any proteolytic activity. Forms an icosahedral capsid of pseudo T=3 symmetry with capsid proteins VP0 and VP3. Together they form an icosahedral capsid composed of 60 copies of each VP0, VP1, and VP3. All the three latter proteins contain a beta-sheet structure called beta-barrel jelly roll. Functionally, forms an icosahedral capsid of pseudo T=3 symmetry with capsid proteins VP1 and VP3. Together they form an icosahedral capsid composed of 60 copies of each VP0, VP1, and VP3. All the three latter proteins contain a beta-sheet structure called beta-barrel jelly roll. In terms of biological role, forms an icosahedral capsid of pseudo T=3 symmetry with capsid proteins VP0 and VP1. Together they form an icosahedral capsid composed of 60 copies of each VP0, VP1, and VP3. All the three latter proteins contain a beta-sheet structure called beta-barrel jelly roll. Its function is as follows. Required for viral RNA replication. Does not have any proteolytic activity. Affects membrane integrity and causes an increase in membrane permeability. Functionally, induces and associates with structural rearrangements of intracellular membranes. Displays RNA-binding, nucleotide binding and NTPase activities. May play a role in virion morphogenesis and viral RNA encapsidation by interacting with the capsid protein VP3. In terms of biological role, serves as membrane anchor via its hydrophobic domain. Plays an essential role in viral RNA replication by recruiting PI4KB at the viral replication sites, thereby allowing the formation of rearranged membranous structures where viral replication takes place. Its function is as follows. Forms a primer, VPg-pU, which is utilized by the polymerase for the initiation of RNA chains. Cysteine protease that generates mature viral proteins from the precursor polyprotein. In addition to its proteolytic activity, it binds to viral RNA, and thus influences viral genome replication. RNA and substrate cooperatively bind to the protease. Functionally, replicates the genomic and antigenomic RNAs by recognizing replications specific signals. Performs VPg uridylylation. This chain is Genome polyprotein, found in Homo sapiens (Human).